We begin with the raw amino-acid sequence, 185 residues long: Large ribosomal subunit protein bL12c (185 aa).

The N-terminal 47 residues, 1–47 (MASTALSSAFSLLSLPSSSSPAAAAAAAPRSFAVPSRARPRRAVAVV), are a transit peptide targeting the chloroplast.

Belongs to the bacterial ribosomal protein bL12 family.

Its subcellular location is the plastid. It is found in the chloroplast. The polypeptide is Large ribosomal subunit protein bL12c (RPL12-2) (Oryza sativa subsp. japonica (Rice)).